Reading from the N-terminus, the 2110-residue chain is Protein Ycf2 (2110 aa).

Residues 190 to 209 (DSSQLKGSSDQSRDPLDSIS) form a disordered region. ATP is bound at residue 1442–1449 (GSIGTGRS).

The protein belongs to the Ycf2 family.

The protein localises to the plastid. The protein resides in the chloroplast stroma. In terms of biological role, probable ATPase of unknown function. Its presence in a non-photosynthetic plant (Epifagus virginiana) and experiments in tobacco indicate that it has an essential function which is probably not related to photosynthesis. This Panax ginseng (Korean ginseng) protein is Protein Ycf2.